The following is a 563-amino-acid chain: Cytochrome b (563 aa).

Transmembrane regions (helical) follow at residues 36 to 61, 81 to 104, 119 to 141, 193 to 220, 255 to 276, 326 to 345, 358 to 379, 387 to 409, 436 to 454, 458 to 476, 505 to 527, and 539 to 557; these read SYWL…LLYY, SVLL…HMFR, WVTG…SLVS, RLLG…ERYG, LSIV…ANIN, ILTI…LPFL, FWTW…WGYL, TSAQ…YLWP, ILLG…FNFI, TLIN…IYAL, IAFF…MWTL, and MDLG…LYHY. Residues His-87 and His-101 each coordinate heme. Heme contacts are provided by His-198 and His-212.

The protein belongs to the cytochrome b family. In terms of assembly, it is a component of at least 2 distinct terminal oxidases, the quinol oxidase (SoxABC) and the alternate quinol oxidase with the core components SoxM and a Rieske Fe-S protein.

It is found in the cell membrane. Functionally, binds 2 heme groups (b586 and b606) which are not covalently bound to the protein. The protein is Cytochrome b (soxC) of Sulfolobus acidocaldarius (strain ATCC 33909 / DSM 639 / JCM 8929 / NBRC 15157 / NCIMB 11770).